Reading from the N-terminus, the 151-residue chain is UPF0208 membrane protein Ent638_2839 (151 aa).

A run of 2 helical transmembrane segments spans residues 46-65 and 69-91; these read YAIRFMPPIAVFTLCWQIAL and LGPAVATALFALSLPMQGLWWLG.

It belongs to the UPF0208 family.

The protein resides in the cell inner membrane. In Enterobacter sp. (strain 638), this protein is UPF0208 membrane protein Ent638_2839.